The following is a 177-amino-acid chain: Transcriptional regulator MET31 (177 aa).

The C2H2-type zinc-finger motif lies at 95–117; the sequence is YSCAKCQLKFSRSSDLRRHEKVH.

As to quaternary structure, interacts with MET4 and MET28.

The protein localises to the cytoplasm. It localises to the nucleus. Its function is as follows. Auxiliary transcriptional regulator of sulfur amino acid metabolism. Involved in the transcriptional activation of MET28. This chain is Transcriptional regulator MET31 (MET31), found in Saccharomyces cerevisiae (strain ATCC 204508 / S288c) (Baker's yeast).